We begin with the raw amino-acid sequence, 232 residues long: Dehydrin DHN2 (232 aa).

Residues 1 to 12 (MSQYQNQYGAQT) show a composition bias toward polar residues. 3 disordered regions span residues 1 to 92 (MSQY…STNT), 131 to 156 (PGTE…SGGG), and 173 to 232 (PGDK…CTGH). Over residues 73-82 (THTGGVGGYG) the composition is skewed to gly residues. The span at 131 to 140 (PGTEQSRTHT) shows a compositional bias: basic and acidic residues. Residues 143–156 (TGYGSTGYGASGGG) show a composition bias toward gly residues. A compositionally biased stretch (basic and acidic residues) spans 200–223 (YVREEHRVDHGEKKGIMDKIKEKL).

It belongs to the plant dehydrin family.

This chain is Dehydrin DHN2 (DHN2), found in Pisum sativum (Garden pea).